A 328-amino-acid chain; its full sequence is Stress response kinase A (328 aa).

The active-site Proton acceptor is the D201. N206 and D217 together coordinate Mg(2+). Residue D217 is part of the active site.

The protein belongs to the SrkA/RdoA protein kinase family. Monomer. It depends on Mg(2+) as a cofactor.

The protein localises to the cytoplasm. It catalyses the reaction L-seryl-[protein] + ATP = O-phospho-L-seryl-[protein] + ADP + H(+). The enzyme catalyses L-threonyl-[protein] + ATP = O-phospho-L-threonyl-[protein] + ADP + H(+). In terms of biological role, a protein kinase that phosphorylates Ser and Thr residues. Probably acts to suppress the effects of stress linked to accumulation of reactive oxygen species. Probably involved in the extracytoplasmic stress response. In Escherichia coli O6:H1 (strain CFT073 / ATCC 700928 / UPEC), this protein is Stress response kinase A.